The following is a 341-amino-acid chain: S-adenosylmethionine:tRNA ribosyltransferase-isomerase (341 aa).

This sequence belongs to the QueA family. In terms of assembly, monomer.

It localises to the cytoplasm. The enzyme catalyses 7-aminomethyl-7-carbaguanosine(34) in tRNA + S-adenosyl-L-methionine = epoxyqueuosine(34) in tRNA + adenine + L-methionine + 2 H(+). It functions in the pathway tRNA modification; tRNA-queuosine biosynthesis. In terms of biological role, transfers and isomerizes the ribose moiety from AdoMet to the 7-aminomethyl group of 7-deazaguanine (preQ1-tRNA) to give epoxyqueuosine (oQ-tRNA). The sequence is that of S-adenosylmethionine:tRNA ribosyltransferase-isomerase from Desulfitobacterium hafniense (strain DSM 10664 / DCB-2).